Consider the following 250-residue polypeptide: Triosephosphate isomerase (250 aa).

9–11 provides a ligand contact to substrate; it reads NWK. The active-site Electrophile is the H96. E166 acts as the Proton acceptor in catalysis. Substrate-binding positions include G172, S212, and 233 to 234; that span reads GG.

It belongs to the triosephosphate isomerase family. Homodimer.

It is found in the cytoplasm. It carries out the reaction D-glyceraldehyde 3-phosphate = dihydroxyacetone phosphate. It participates in carbohydrate biosynthesis; gluconeogenesis. It functions in the pathway carbohydrate degradation; glycolysis; D-glyceraldehyde 3-phosphate from glycerone phosphate: step 1/1. Its function is as follows. Involved in the gluconeogenesis. Catalyzes stereospecifically the conversion of dihydroxyacetone phosphate (DHAP) to D-glyceraldehyde-3-phosphate (G3P). The protein is Triosephosphate isomerase of Chlorobium luteolum (strain DSM 273 / BCRC 81028 / 2530) (Pelodictyon luteolum).